Reading from the N-terminus, the 225-residue chain is Phosphoserine phosphatase (225 aa).

Methionine 1 carries the post-translational modification N-acetylmethionine. Residue aspartate 20 is the Nucleophile of the active site. Mg(2+) contacts are provided by aspartate 20 and aspartate 22. 20–22 (DVD) lines the L-serine pocket. Aspartate 22 acts as the Proton donor in catalysis. An O-phospho-L-serine-binding site is contributed by methionine 52. A phosphate-binding site is contributed by glycine 53. L-serine is bound by residues 109–111 (SGG) and lysine 158. O-phospho-L-serine is bound by residues 109–111 (SGG) and lysine 158. Residue aspartate 179 coordinates Mg(2+). Threonine 182 contributes to the O-phospho-L-serine binding site. Residue threonine 182 coordinates phosphate.

This sequence belongs to the HAD-like hydrolase superfamily. SerB family. As to quaternary structure, homodimer. Requires Mg(2+) as cofactor.

The protein localises to the cytoplasm. It is found in the cytosol. The enzyme catalyses O-phospho-L-serine + H2O = L-serine + phosphate. It catalyses the reaction O-phospho-D-serine + H2O = D-serine + phosphate. It functions in the pathway amino-acid biosynthesis; L-serine biosynthesis; L-serine from 3-phospho-D-glycerate: step 3/3. Its function is as follows. Catalyzes the last irreversible step in the biosynthesis of L-serine from carbohydrates, the dephosphorylation of O-phospho-L-serine to L-serine. L-serine can then be used in protein synthesis, to produce other amino acids, in nucleotide metabolism or in glutathione synthesis, or can be racemized to D-serine, a neuromodulator. May also act on O-phospho-D-serine. The polypeptide is Phosphoserine phosphatase (Rattus norvegicus (Rat)).